We begin with the raw amino-acid sequence, 79 residues long: MTKIIYCIYLKKYAEGLKFPCYPGKLGEYIYKNISQEAWNKWQNVQTILINENKLNMLCAKDRSIIEKKMKKFLCLKPL.

It belongs to the Fe(2+)-trafficking protein family. In terms of assembly, monomer.

Functionally, could be a mediator in iron transactions between iron acquisition and iron-requiring processes, such as synthesis and/or repair of Fe-S clusters in biosynthetic enzymes. The polypeptide is Probable Fe(2+)-trafficking protein (Blochmanniella floridana).